The primary structure comprises 322 residues: Large ribosomal subunit protein uL15m (322 aa).

Residues 1–57 (MKAERQTGLRNSFTTVIGRKLINTFVPSMMLTSVAGNDIFFRGLFKSPVLAFQSYRY) constitute a mitochondrion transit peptide. A disordered region spans residues 69-99 (GSTKSFKRLGRGPSSGLGKTSGRGQKGQKAR). Residues 81–93 (PSSGLGKTSGRGQ) show a composition bias toward gly residues.

The protein belongs to the universal ribosomal protein uL15 family. As to quaternary structure, component of the mitochondrial large ribosomal subunit (mt-LSU). Mature yeast 74S mitochondrial ribosomes consist of a small (37S) and a large (54S) subunit. The 37S small subunit contains a 15S ribosomal RNA (15S mt-rRNA) and 34 different proteins. The 54S large subunit contains a 21S rRNA (21S mt-rRNA) and 46 different proteins.

Its subcellular location is the mitochondrion. In terms of biological role, component of the mitochondrial ribosome (mitoribosome), a dedicated translation machinery responsible for the synthesis of mitochondrial genome-encoded proteins, including at least some of the essential transmembrane subunits of the mitochondrial respiratory chain. The mitoribosomes are attached to the mitochondrial inner membrane and translation products are cotranslationally integrated into the membrane. This is Large ribosomal subunit protein uL15m (MRPL10) from Saccharomyces cerevisiae (strain ATCC 204508 / S288c) (Baker's yeast).